Reading from the N-terminus, the 489-residue chain is Metal cation symporter ZIP14 (489 aa).

The signal sequence occupies residues 1–28 (MKRLHPALPSCLLLVLFGIWRTAPQTHA). Residues 29–155 (SSAGLPPLSA…PSAIEVWGYG (127 aa)) lie on the Extracellular side of the membrane. 4 N-linked (GlcNAc...) asparagine glycosylation sites follow: Asn52, Asn75, Asn85, and Asn100. A helical membrane pass occupies residues 156–176 (FLCVTVISLCSLMGASVVPFM). The Cytoplasmic portion of the chain corresponds to 177–184 (KKTFYKRL). Residues 185–205 (LLYFIALAIGTLYSNALFQLI) traverse the membrane as a helical segment. At 206–221 (PEAFGFNPQDNYVSKS) the chain is on the extracellular side. A helical transmembrane segment spans residues 222–242 (AVVFGGFYLFFFTEKILKMLL). Residues 243–349 (KQKNEHHHGH…SDGLHNFIDG (107 aa)) lie on the Cytoplasmic side of the membrane. Positions 248-255 (HHHGHNHF) match the HHHGHXHX-motif motif. The chain crosses the membrane as a helical span at residues 350-370 (LAIGASFTVSVFQGISTSVAI). The Extracellular portion of the chain corresponds to 371 to 394 (LCEEFPHELGDFVILLNAGMSIQQ). The XEXPHE-motif motif lies at 373-378 (EEFPHE). The chain crosses the membrane as a helical span at residues 395–415 (ALFFNFLSACCCYLGLAFGIL). The Cytoplasmic segment spans residues 416-421 (AGSHFS). A helical membrane pass occupies residues 422-442 (ANWIFALAGGMFLYIALADMF). At 443 to 457 (PEMNEVCQEDEKNDS) the chain is on the extracellular side. The chain crosses the membrane as a helical span at residues 458-478 (FLVPFVIQNLGLLTGFSIMLV). Residues 479 to 489 (LTMYSGQIQIG) lie on the Cytoplasmic side of the membrane.

This sequence belongs to the ZIP transporter (TC 2.A.5) family. Homotrimer. Post-translationally, ubiquitinated. Ubiquitination occurs upon iron depletion. The ubiquitinated form undergoes proteasomal degradation. In terms of processing, N-glycosylated. N-glycosylation at Asn-100 is required for iron-regulated extraction of the transporter from membranes and subsequent proteasomal degradation. In terms of tissue distribution, widely expressed. Highly and transiently expressed during the early stage of adipocyte differentiation. Strongly expressed in liver, preadipocyte, duodenum and jejunum, moderately in brain, heart, skeletal muscle, spleen, pancreas, kidney and white adipose cells. Expression is almost undetectable in lung, testis and brown adipose cells. Expressed by chondrocytes and pituitary cells. More strongly expressed in brain. As to expression, more strongly expressed in liver, kidney and duodenum.

Its subcellular location is the cell membrane. The protein localises to the apical cell membrane. It localises to the basolateral cell membrane. It is found in the early endosome membrane. The protein resides in the late endosome membrane. Its subcellular location is the lysosome membrane. It catalyses the reaction Zn(2+)(out) + 2 hydrogencarbonate(out) = Zn(2+)(in) + 2 hydrogencarbonate(in). It carries out the reaction Mn(2+)(out) + 2 hydrogencarbonate(out) = Mn(2+)(in) + 2 hydrogencarbonate(in). The catalysed reaction is Fe(2+)(out) + 2 hydrogencarbonate(out) = Fe(2+)(in) + 2 hydrogencarbonate(in). The enzyme catalyses Cd(2+)(out) + 2 hydrogencarbonate(out) = Cd(2+)(in) + 2 hydrogencarbonate(in). Inhibited by cyanide and therefore dependent of an energy source. Inhibited by DIDS/4,4'-diisothiocyanatostilbene-2,2'-disulfonic acid, an inhibitor hydrogencarbonate-dependent transporters. Functionally, electroneutral transporter of the plasma membrane mediating the cellular uptake of the divalent metal cations zinc, manganese and iron that are important for tissue homeostasis, metabolism, development and immunity. Functions as an energy-dependent symporter, transporting through the membranes an electroneutral complex composed of a divalent metal cation and two bicarbonate anions. Beside these endogenous cellular substrates, can also import cadmium a non-essential metal which is cytotoxic and carcinogenic. Controls the cellular uptake by the intestinal epithelium of systemic zinc, which is in turn required to maintain tight junctions and the intestinal permeability. Modifies the activity of zinc-dependent phosphodiesterases, thereby indirectly regulating G protein-coupled receptor signaling pathways important for gluconeogenesis and chondrocyte differentiation. Regulates insulin receptor signaling, glucose uptake, glycogen synthesis and gluconeogenesis in hepatocytes through the zinc-dependent intracellular catabolism of insulin. Through zinc cellular uptake also plays a role in the adaptation of cells to endoplasmic reticulum stress. Major manganese transporter of the basolateral membrane of intestinal epithelial cells, it plays a central role in manganese systemic homeostasis through intestinal manganese uptake. Also involved in manganese extracellular uptake by cells of the blood-brain barrier. May also play a role in manganese and zinc homeostasis participating in their elimination from the blood through the hepatobiliary excretion. Also functions in the extracellular uptake of free iron. May also function intracellularly and mediate the transport from endosomes to cytosol of iron endocytosed by transferrin. Plays a role in innate immunity by regulating the expression of cytokines by activated macrophages. The protein is Metal cation symporter ZIP14 of Mus musculus (Mouse).